The chain runs to 367 residues: Glutamate 5-kinase (367 aa).

Residue Lys-10 coordinates ATP. Positions 50, 137, and 149 each coordinate substrate. ATP is bound by residues 169–170 and 211–217; these read TD and TGGMSTK. Positions 275–353 constitute a PUA domain; sequence AGIITIDAGA…QDIEQVLGYE (79 aa).

This sequence belongs to the glutamate 5-kinase family.

It is found in the cytoplasm. The catalysed reaction is L-glutamate + ATP = L-glutamyl 5-phosphate + ADP. The protein operates within amino-acid biosynthesis; L-proline biosynthesis; L-glutamate 5-semialdehyde from L-glutamate: step 1/2. Functionally, catalyzes the transfer of a phosphate group to glutamate to form L-glutamate 5-phosphate. The protein is Glutamate 5-kinase of Pasteurella multocida (strain Pm70).